The primary structure comprises 373 residues: Erythronate-4-phosphate dehydrogenase (373 aa).

The substrate site is built by Ser45 and Thr67. Residues Asp147, 206-208 (ASR), and Asp232 contribute to the NAD(+) site. Arg208 is an active-site residue. The active site involves Glu237. The Proton donor role is filled by His254. Gly257 lines the NAD(+) pocket. Tyr258 is a substrate binding site.

The protein belongs to the D-isomer specific 2-hydroxyacid dehydrogenase family. PdxB subfamily. Homodimer.

The protein resides in the cytoplasm. The enzyme catalyses 4-phospho-D-erythronate + NAD(+) = (R)-3-hydroxy-2-oxo-4-phosphooxybutanoate + NADH + H(+). The protein operates within cofactor biosynthesis; pyridoxine 5'-phosphate biosynthesis; pyridoxine 5'-phosphate from D-erythrose 4-phosphate: step 2/5. Functionally, catalyzes the oxidation of erythronate-4-phosphate to 3-hydroxy-2-oxo-4-phosphonooxybutanoate. The sequence is that of Erythronate-4-phosphate dehydrogenase from Tolumonas auensis (strain DSM 9187 / NBRC 110442 / TA 4).